The primary structure comprises 303 residues: Oxygen-dependent coproporphyrinogen-III oxidase (303 aa).

A substrate-binding site is contributed by serine 94. Residues histidine 98 and histidine 108 each coordinate a divalent metal cation. Histidine 108 (proton donor) is an active-site residue. 110 to 112 serves as a coordination point for substrate; that stretch reads NVR. Positions 147 and 177 each coordinate a divalent metal cation. The segment at 242 to 277 is important for dimerization; it reads YVEFNLVYDRGTLFGLQTGGRTESILMSLPPLVRWE. Position 260 to 262 (260 to 262) interacts with substrate; the sequence is GGR.

This sequence belongs to the aerobic coproporphyrinogen-III oxidase family. As to quaternary structure, homodimer. The cofactor is a divalent metal cation.

It is found in the cytoplasm. It carries out the reaction coproporphyrinogen III + O2 + 2 H(+) = protoporphyrinogen IX + 2 CO2 + 2 H2O. Its pathway is porphyrin-containing compound metabolism; protoporphyrin-IX biosynthesis; protoporphyrinogen-IX from coproporphyrinogen-III (O2 route): step 1/1. Involved in the heme biosynthesis. Catalyzes the aerobic oxidative decarboxylation of propionate groups of rings A and B of coproporphyrinogen-III to yield the vinyl groups in protoporphyrinogen-IX. This Saccharophagus degradans (strain 2-40 / ATCC 43961 / DSM 17024) protein is Oxygen-dependent coproporphyrinogen-III oxidase.